We begin with the raw amino-acid sequence, 93 residues long: Zinc metalloproteinase-disintegrin-like leucurogin (93 aa).

The Disintegrin domain occupies 8 to 93 (PPVCGNELLE…SECPADVGHK (86 aa)). Val-10, Asn-13, Leu-15, Glu-17, Glu-20, and Asp-23 together coordinate Ca(2+). 7 disulfides stabilise this stretch: Cys-11/Cys-40, Cys-22/Cys-35, Cys-24/Cys-30, Cys-34/Cys-57, Cys-48/Cys-54, Cys-53/Cys-79, and Cys-66/Cys-86. The short motif at 72 to 74 (ECD) is the D/ECD-tripeptide element. Positions 74, 75, 77, 89, and 90 each coordinate Ca(2+). Residues 74–93 (DPAEHCTGQSSECPADVGHK) are disordered.

The protein belongs to the venom metalloproteinase (M12B) family. P-III subfamily. Monomer. Requires Zn(2+) as cofactor. N-glycosylated. In terms of tissue distribution, expressed by the venom gland.

The protein resides in the secreted. Its function is as follows. Snake venom zinc metalloprotease that possesses hemorrhagic activity. The disintegrin-like domain has been expressed and named leucurogin. This recombinant disintegrin is able to inhibit collagen-induced platelet aggregation but not ADP- or arachidonic acid-induced platelet aggregation. Furthermore, it inhibits the adhesion of human fibroblasts to collagen type I. It also reduces adhesion and migration of human fibroblasts and inhibits migration and proliferation of human and mouse melanoma cell lines (BLM, and B16-F10-Nex2). In vitro, it inhibits the vascular structures formation by endothelial cells. In addition, it inhibits the growth of experimental Ehrlich tumor and has anti-angiogenesis effect on the sponge implant model. In vivo, when intraperitoneally injected into mice, it inhibits lung metastasis of B16F10 Nex-2 cells. In the treatment of human melanoma, grafted intradermally in the nude mice flank, it inhibits tumor growth. The polypeptide is Zinc metalloproteinase-disintegrin-like leucurogin (Bothrops leucurus (Whitetail lancehead)).